A 496-amino-acid polypeptide reads, in one-letter code: Adenosylhomocysteinase (496 aa).

Substrate contacts are provided by T68, D157, and E219. 220–222 (TTT) is an NAD(+) binding site. Positions 249 and 253 each coordinate substrate. NAD(+) is bound by residues N254, 283-288 (GYGDVG), E306, N341, 362-364 (IGH), and N410.

Belongs to the adenosylhomocysteinase family. It depends on NAD(+) as a cofactor.

It localises to the cytoplasm. It carries out the reaction S-adenosyl-L-homocysteine + H2O = L-homocysteine + adenosine. It participates in amino-acid biosynthesis; L-homocysteine biosynthesis; L-homocysteine from S-adenosyl-L-homocysteine: step 1/1. Functionally, may play a key role in the regulation of the intracellular concentration of adenosylhomocysteine. The protein is Adenosylhomocysteinase of Mycolicibacterium paratuberculosis (strain ATCC BAA-968 / K-10) (Mycobacterium paratuberculosis).